The primary structure comprises 651 residues: DNA endonuclease RBBP8 (651 aa).

2 coiled-coil regions span residues 35–84 (LQEL…EDRL) and 117–138 (ISEL…SLEL). Disordered regions lie at residues 138-199 (LERL…PESR), 363-433 (NGRL…EHQA), and 487-539 (YESC…SDKS). Residues 363 to 379 (NGRLQSKNQETSEIETT) show a composition bias toward polar residues. Basic and acidic residues predominate over residues 380 to 391 (QDSKKKCLDGHT). Acidic residues predominate over residues 503 to 515 (VYEEEREEDDPEE). Over residues 525-539 (RPADRKPLVSDSDKS) the composition is skewed to basic and acidic residues. A phosphothreonine mark is found at Thr-599 and Thr-611.

This sequence belongs to the COM1/SAE2/CtIP family. In terms of assembly, homotetramer; formed by antiparallel association of helical extensions protruding from the N-termini of two parallel coiled-coil dimers. Interacts with the MRN complex; the interaction links DNA sensing to resection. Interacts with samhd1. Phosphorylation at Thr-599 and Thr-611 promote interaction with nbn and recruitment to double-strand breaks (DSBs).

The protein resides in the nucleus. Its subcellular location is the chromosome. Functionally, endonuclease that cooperates with the MRE11-RAD50-NBN (MRN) complex in DNA-end resection, the first step of double-strand break (DSB) repair through the homologous recombination (HR) pathway. Functions downstream of the MRN complex and ATM, promotes ATR activation and its recruitment to DSBs in the S/G2 phase facilitating the generation of ssDNA. Specifically promotes the endonuclease activity of the MRN complex to clear DNA ends containing protein adducts: recruited to DSBs by nbn following phosphorylation, and promotes the endonuclease of mre11 to clear protein-DNA adducts and generate clean double-strand break ends. This is DNA endonuclease RBBP8 (rbbp8) from Danio rerio (Zebrafish).